The primary structure comprises 216 residues: Pyrophosphatase PpaX (216 aa).

The active-site Nucleophile is the D9.

The protein belongs to the HAD-like hydrolase superfamily. PpaX family. The cofactor is Mg(2+).

It catalyses the reaction diphosphate + H2O = 2 phosphate + H(+). In terms of biological role, hydrolyzes pyrophosphate formed during P-Ser-HPr dephosphorylation by HPrK/P. Might play a role in controlling the intracellular pyrophosphate pool. This is Pyrophosphatase PpaX from Bacillus cereus (strain Q1).